A 197-amino-acid chain; its full sequence is Peptidyl-tRNA hydrolase (197 aa).

Tyr21 serves as a coordination point for tRNA. His26 functions as the Proton acceptor in the catalytic mechanism. TRNA-binding residues include Tyr72, Asn74, and Asn120.

This sequence belongs to the PTH family. Monomer.

It localises to the cytoplasm. It catalyses the reaction an N-acyl-L-alpha-aminoacyl-tRNA + H2O = an N-acyl-L-amino acid + a tRNA + H(+). Its function is as follows. Hydrolyzes ribosome-free peptidyl-tRNAs (with 1 or more amino acids incorporated), which drop off the ribosome during protein synthesis, or as a result of ribosome stalling. Functionally, catalyzes the release of premature peptidyl moieties from peptidyl-tRNA molecules trapped in stalled 50S ribosomal subunits, and thus maintains levels of free tRNAs and 50S ribosomes. This chain is Peptidyl-tRNA hydrolase, found in Saccharophagus degradans (strain 2-40 / ATCC 43961 / DSM 17024).